Reading from the N-terminus, the 436-residue chain is 3-ketoacyl-CoA thiolase (436 aa).

Cys99 (acyl-thioester intermediate) is an active-site residue. Catalysis depends on proton acceptor residues His392 and Cys422.

The protein belongs to the thiolase-like superfamily. Thiolase family. In terms of assembly, heterotetramer of two alpha chains (FadJ) and two beta chains (FadI).

The protein localises to the cytoplasm. The catalysed reaction is an acyl-CoA + acetyl-CoA = a 3-oxoacyl-CoA + CoA. It participates in lipid metabolism; fatty acid beta-oxidation. Its function is as follows. Catalyzes the final step of fatty acid oxidation in which acetyl-CoA is released and the CoA ester of a fatty acid two carbons shorter is formed. The protein is 3-ketoacyl-CoA thiolase of Serratia proteamaculans (strain 568).